Reading from the N-terminus, the 88-residue chain is Large ribosomal subunit protein eL15 (88 aa).

The protein belongs to the eukaryotic ribosomal protein eL15 family.

This Brassica napus (Rape) protein is Large ribosomal subunit protein eL15 (RPL15).